A 234-amino-acid polypeptide reads, in one-letter code: Probable transcriptional regulatory protein Pfl01_3677 (234 aa).

This sequence belongs to the TACO1 family.

It localises to the cytoplasm. The protein is Probable transcriptional regulatory protein Pfl01_3677 of Pseudomonas fluorescens (strain Pf0-1).